Consider the following 408-residue polypeptide: Arginine biosynthesis bifunctional protein ArgJ 1 (408 aa).

Positions 154, 180, 191, 277, 403, and 408 each coordinate substrate. Thr-191 serves as the catalytic Nucleophile.

It belongs to the ArgJ family. Heterotetramer of two alpha and two beta chains.

Its subcellular location is the cytoplasm. The enzyme catalyses N(2)-acetyl-L-ornithine + L-glutamate = N-acetyl-L-glutamate + L-ornithine. The catalysed reaction is L-glutamate + acetyl-CoA = N-acetyl-L-glutamate + CoA + H(+). It functions in the pathway amino-acid biosynthesis; L-arginine biosynthesis; L-ornithine and N-acetyl-L-glutamate from L-glutamate and N(2)-acetyl-L-ornithine (cyclic): step 1/1. The protein operates within amino-acid biosynthesis; L-arginine biosynthesis; N(2)-acetyl-L-ornithine from L-glutamate: step 1/4. In terms of biological role, catalyzes two activities which are involved in the cyclic version of arginine biosynthesis: the synthesis of N-acetylglutamate from glutamate and acetyl-CoA as the acetyl donor, and of ornithine by transacetylation between N(2)-acetylornithine and glutamate. The chain is Arginine biosynthesis bifunctional protein ArgJ 1 from Clostridium acetobutylicum (strain ATCC 824 / DSM 792 / JCM 1419 / IAM 19013 / LMG 5710 / NBRC 13948 / NRRL B-527 / VKM B-1787 / 2291 / W).